The following is an 859-amino-acid chain: Catenin delta-1 (859 aa).

Residues 15–44 (SVRAQEAQFELLSRALEEERRHVTAQLDRV) adopt a coiled-coil conformation. The segment at 226 to 254 (IDGPDYATTGRRGANGGDPRRRLRSYEDP) is disordered. Residues 243 to 254 (DPRRRLRSYEDP) show a composition bias toward basic and acidic residues. ARM repeat units follow at residues 279 to 317 (APNS…HLSY), 320 to 359 (EDVK…NLSY), 363 to 401 (RENK…VTGT), 402 to 446 (LWNL…RVEG), 464 to 503 (LRNI…LVDS), 513 to 552 (LRNI…VRRG), 574 to 614 (AQGY…NLCA), 621 to 660 (RCIR…NLCG), 661 to 700 (DNRN…CVIN), and 701 to 746 (TIHE…GFCL).

The protein belongs to the beta-catenin family. In terms of assembly, interacts with C-cadherin and with zbtb33. As to expression, ubiquitously expressed.

It is found in the cell junction. The protein localises to the adherens junction. The protein resides in the cytoplasm. Its subcellular location is the nucleus. It localises to the cell membrane. Its function is as follows. Key regulator of cell-cell adhesion that associates with and regulates the cell adhesion properties of both C-, E- and N-cadherins, being critical for their surface stability. Beside cell-cell adhesion, regulates gene transcription through several transcription factors including ZBTB33/Kaiso2 and GLIS2, and the activity of Rho family GTPases and downstream cytoskeletal dynamics. Implicated both in cell transformation by SRC and in ligand-induced receptor signaling through the EGF, PDGF, CSF-1 and ERBB2 receptors. Required for gastrulation, axial elongation and development of the craniofacial skeleton and eye. This chain is Catenin delta-1 (ctnnd1), found in Xenopus laevis (African clawed frog).